The sequence spans 357 residues: Glycerol-1-phosphate dehydrogenase [NAD(P)+] (357 aa).

NAD(+) contacts are provided by residues 104-108 and 126-129; these read GKTID and TAAS. Asp131 contacts substrate. Ser135 is a binding site for NAD(+). Asp178 lines the substrate pocket. Zn(2+) is bound by residues Asp178 and His258. His262 serves as a coordination point for substrate. Position 274 (His274) interacts with Zn(2+).

The protein belongs to the glycerol-1-phosphate dehydrogenase family. It depends on Zn(2+) as a cofactor.

The protein localises to the cytoplasm. The catalysed reaction is sn-glycerol 1-phosphate + NAD(+) = dihydroxyacetone phosphate + NADH + H(+). It carries out the reaction sn-glycerol 1-phosphate + NADP(+) = dihydroxyacetone phosphate + NADPH + H(+). It participates in membrane lipid metabolism; glycerophospholipid metabolism. In terms of biological role, catalyzes the NAD(P)H-dependent reduction of dihydroxyacetonephosphate (DHAP or glycerone phosphate) to glycerol 1-phosphate (G1P). The G1P thus generated is used as the glycerophosphate backbone of phospholipids in the cellular membranes of Archaea. This is Glycerol-1-phosphate dehydrogenase [NAD(P)+] from Methanococcoides burtonii (strain DSM 6242 / NBRC 107633 / OCM 468 / ACE-M).